A 159-amino-acid chain; its full sequence is Phosphopantetheine adenylyltransferase (159 aa).

Ser-8 serves as a coordination point for substrate. ATP is bound by residues 8–9 (SF) and His-16. 3 residues coordinate substrate: Lys-40, Val-72, and Arg-86. Residues 87-89 (GVR), Glu-97, and 122-128 (YAALRSS) contribute to the ATP site.

This sequence belongs to the bacterial CoaD family. As to quaternary structure, homohexamer. The cofactor is Mg(2+).

The protein resides in the cytoplasm. It catalyses the reaction (R)-4'-phosphopantetheine + ATP + H(+) = 3'-dephospho-CoA + diphosphate. It functions in the pathway cofactor biosynthesis; coenzyme A biosynthesis; CoA from (R)-pantothenate: step 4/5. Its function is as follows. Reversibly transfers an adenylyl group from ATP to 4'-phosphopantetheine, yielding dephospho-CoA (dPCoA) and pyrophosphate. The sequence is that of Phosphopantetheine adenylyltransferase from Treponema pallidum (strain Nichols).